Consider the following 400-residue polypeptide: Lysophospholipid transporter LplT (400 aa).

Helical transmembrane passes span 19–39 (VIVAQFLSAFGDNALLFATLA), 53–73 (VLQMVFVGAYILFAPFVGQIA), 91–111 (AGAAGICLGINPFVGYTLVGI), 139–159 (MMEASTIAAILLGSVAGGVLA), 164–184 (IAALVACALAYAGAVAANLFI), 195–213 (SWRLSAMTRSFFSACVVLW), 227–247 (LFWGAGVTLRFLLVLWVPVAL), 257–277 (YLNAMVAVGIVVGAGAAAKLV), 281–301 (TVSRCMPAGILIGVVVAIFSL), 304–324 (ALLPAYALLLLIGMLGGFFVV), 352–372 (NSAMLLMLGLYSLAVLVGVPA), and 373–393 (VAIGIGFGVLFALAIAALWIW).

The protein belongs to the major facilitator superfamily. LplT (TC 2.A.1.42) family.

Its subcellular location is the cell inner membrane. Catalyzes the facilitated diffusion of 2-acyl-glycero-3-phosphoethanolamine (2-acyl-GPE) into the cell. The protein is Lysophospholipid transporter LplT of Salmonella paratyphi B (strain ATCC BAA-1250 / SPB7).